Consider the following 447-residue polypeptide: Phosphoglucosamine mutase (447 aa).

The active-site Phosphoserine intermediate is serine 102. Mg(2+)-binding residues include serine 102, aspartate 241, aspartate 243, and aspartate 245. At serine 102 the chain carries Phosphoserine.

Belongs to the phosphohexose mutase family. Mg(2+) is required as a cofactor. Post-translationally, activated by phosphorylation.

The enzyme catalyses alpha-D-glucosamine 1-phosphate = D-glucosamine 6-phosphate. Catalyzes the conversion of glucosamine-6-phosphate to glucosamine-1-phosphate. This Delftia acidovorans (strain DSM 14801 / SPH-1) protein is Phosphoglucosamine mutase.